The sequence spans 1406 residues: DNA-directed RNA polymerase subunit beta' (1406 aa).

The Zn(2+) site is built by Cys70, Cys72, Cys85, and Cys88. Residues Asp460, Asp462, and Asp464 each contribute to the Mg(2+) site. Zn(2+) is bound by residues Cys814, Cys889, Cys896, and Cys899.

This sequence belongs to the RNA polymerase beta' chain family. As to quaternary structure, the RNAP catalytic core consists of 2 alpha, 1 beta, 1 beta' and 1 omega subunit. When a sigma factor is associated with the core the holoenzyme is formed, which can initiate transcription. Requires Mg(2+) as cofactor. The cofactor is Zn(2+).

The catalysed reaction is RNA(n) + a ribonucleoside 5'-triphosphate = RNA(n+1) + diphosphate. Functionally, DNA-dependent RNA polymerase catalyzes the transcription of DNA into RNA using the four ribonucleoside triphosphates as substrates. The sequence is that of DNA-directed RNA polymerase subunit beta' from Stenotrophomonas maltophilia (strain K279a).